The following is a 424-amino-acid chain: Phosphomethylpyrimidine synthase (424 aa).

Substrate-binding positions include Asn-66, Met-95, Tyr-124, His-163, 185 to 187, 226 to 229, and Glu-265; these read SRG and DGMR. Residue His-269 participates in Zn(2+) binding. Residue Phe-292 participates in substrate binding. His-333 provides a ligand contact to Zn(2+). Cys-408, Cys-411, and Cys-415 together coordinate [4Fe-4S] cluster.

The protein belongs to the ThiC family. Requires [4Fe-4S] cluster as cofactor.

It catalyses the reaction 5-amino-1-(5-phospho-beta-D-ribosyl)imidazole + S-adenosyl-L-methionine = 4-amino-2-methyl-5-(phosphooxymethyl)pyrimidine + CO + 5'-deoxyadenosine + formate + L-methionine + 3 H(+). The protein operates within cofactor biosynthesis; thiamine diphosphate biosynthesis. Functionally, catalyzes the synthesis of the hydroxymethylpyrimidine phosphate (HMP-P) moiety of thiamine from aminoimidazole ribotide (AIR) in a radical S-adenosyl-L-methionine (SAM)-dependent reaction. The protein is Phosphomethylpyrimidine synthase of Thermotoga sp. (strain RQ2).